The sequence spans 156 residues: N-glycosidase Npun_R5314 (156 aa).

It belongs to the YbiA family.

The catalysed reaction is 2,5-diamino-6-hydroxy-4-(5-phosphoribosylamino)-pyrimidine + H2O = 2,5,6-triamino-4-hydroxypyrimidine + D-ribose 5-phosphate. The enzyme catalyses 5-amino-6-(5-phospho-D-ribosylamino)uracil + H2O = 5,6-diaminouracil + D-ribose 5-phosphate. Its function is as follows. Catalyzes the hydrolysis of the N-glycosidic bond in the first two intermediates of riboflavin biosynthesis, which are highly reactive metabolites, yielding relatively innocuous products. Thus, can divert a surplus of harmful intermediates into relatively harmless products and pre-empt the damage these intermediates would otherwise do. May act on other substrates in vivo. Has no activity against GTP, nucleoside monophosphates or ADP-ribose. The protein is N-glycosidase Npun_R5314 of Nostoc punctiforme (strain ATCC 29133 / PCC 73102).